Reading from the N-terminus, the 657-residue chain is Major core protein 4b (657 aa).

A propeptide spanning residues 1–61 (MESDSNIAIE…ITEEDVISAG (61 aa)) is cleaved from the precursor.

Belongs to the poxviridae protein P4b family. In terms of processing, the precursor is cleaved to a mature protein during virion maturation. Proteolytic cleavage of major core proteins P4a (A10L), P4b (A3L), and VP8 (L4R), which occurs at a late stage of core formation, is required for production of infectious mature virions (MV).

The protein localises to the virion. In terms of biological role, major component of the virion core that undergoes proteolytic processing during the immature virion (IV) to mature virion (MV) transition. Essential for the formation of a structurally normal core. This chain is Major core protein 4b, found in Vertebrata (FPV).